A 146-amino-acid chain; its full sequence is Ribosome maturation factor RimP (146 aa).

The protein belongs to the RimP family.

The protein localises to the cytoplasm. In terms of biological role, required for maturation of 30S ribosomal subunits. The polypeptide is Ribosome maturation factor RimP (Helicobacter pylori (strain ATCC 700392 / 26695) (Campylobacter pylori)).